Consider the following 320-residue polypeptide: MQTRNTFSWIREEITRSISVSLIIYIITWASISSAYPIFAQQNYENPREATGRIVCANCHLANKPVDIEVPQTVLPDTVFEAVVKIPYDMQLKQVLANGKKGALNVGAVLILPEGFELAPPDRISPEMKEKIGNLSFQNYRPNKKNILVIGPVPGQKYSEITFPILAPDPATNKDVHFLKYPIYVGGNRGRGQIYPDGSKSNNTVYNATAGGIISKILRKEKGGYEITIVDASNGREVIDIIPRGLELLVSEGESIKLDQPLTSNPNVGGFGQGDAEIVLQDPLRVQGLLFFLGSVVLAQIFLVLKKKQFEKVQLSEMNF.

The first 35 residues, 1-35 (MQTRNTFSWIREEITRSISVSLIIYIITWASISSA), serve as a signal peptide directing secretion. Positions 36, 56, 59, and 60 each coordinate heme. Residues 286–305 (VQGLLFFLGSVVLAQIFLVL) form a helical membrane-spanning segment.

This sequence belongs to the cytochrome f family. As to quaternary structure, the 4 large subunits of the cytochrome b6-f complex are cytochrome b6, subunit IV (17 kDa polypeptide, petD), cytochrome f and the Rieske protein, while the 4 small subunits are PetG, PetL, PetM and PetN. The complex functions as a dimer. Requires heme as cofactor.

It is found in the plastid. The protein localises to the chloroplast thylakoid membrane. Component of the cytochrome b6-f complex, which mediates electron transfer between photosystem II (PSII) and photosystem I (PSI), cyclic electron flow around PSI, and state transitions. The sequence is that of Cytochrome f (petA) from Arabidopsis thaliana (Mouse-ear cress).